We begin with the raw amino-acid sequence, 352 residues long: Homocitrate synthase, omega subunit (352 aa).

This sequence belongs to the alpha-IPM synthase/homocitrate synthase family. Heterodimer of an alpha and an omega chain.

It catalyses the reaction acetyl-CoA + 2-oxoglutarate + H2O = (2R)-homocitrate + CoA + H(+). Functionally, this protein is a Fe-Mo-cofactor biosynthetic component. This Clostridium pasteurianum protein is Homocitrate synthase, omega subunit (nifV-OMEGA).